A 156-amino-acid polypeptide reads, in one-letter code: Deoxyuridine 5'-triphosphate nucleotidohydrolase (156 aa).

Substrate-binding positions include 76–78 (RSG), Asn-89, 93–95 (TVD), and Lys-103.

Belongs to the dUTPase family. The cofactor is Mg(2+).

The enzyme catalyses dUTP + H2O = dUMP + diphosphate + H(+). It participates in pyrimidine metabolism; dUMP biosynthesis; dUMP from dCTP (dUTP route): step 2/2. In terms of biological role, this enzyme is involved in nucleotide metabolism: it produces dUMP, the immediate precursor of thymidine nucleotides and it decreases the intracellular concentration of dUTP so that uracil cannot be incorporated into DNA. In Rhizobium rhizogenes (strain K84 / ATCC BAA-868) (Agrobacterium radiobacter), this protein is Deoxyuridine 5'-triphosphate nucleotidohydrolase.